Here is a 191-residue protein sequence, read N- to C-terminus: Probable molybdenum cofactor guanylyltransferase (191 aa).

GTP-binding positions include 6–8, Lys-18, Asp-67, and Asp-92; that span reads LAG. Asp-92 lines the Mg(2+) pocket.

The protein belongs to the MobA family. It depends on Mg(2+) as a cofactor.

The protein localises to the cytoplasm. The catalysed reaction is Mo-molybdopterin + GTP + H(+) = Mo-molybdopterin guanine dinucleotide + diphosphate. Transfers a GMP moiety from GTP to Mo-molybdopterin (Mo-MPT) cofactor (Moco or molybdenum cofactor) to form Mo-molybdopterin guanine dinucleotide (Mo-MGD) cofactor. This is Probable molybdenum cofactor guanylyltransferase from Thermococcus gammatolerans (strain DSM 15229 / JCM 11827 / EJ3).